Reading from the N-terminus, the 435-residue chain is F-box only protein 9 (435 aa).

Positions 1–25 (MAEAEEDCHSDAVRVGDEGHESPAE) are disordered. The segment covering 7-25 (DCHSDAVRVGDEGHESPAE) has biased composition (basic and acidic residues). A TPR repeat occupies 82 to 115 (ARELFLKAVEEEQNGALYEAIKFYRRAMQLVPDI). Position 124 is a phosphoserine (Ser124). The region spanning 173–224 (QTHISVLPMEVLMYIFRWVVSSDLDLRSLEQLSLVCRGFYICARDPEIWRLA) is the F-box domain.

As to quaternary structure, part of the SCF (SKP1-CUL1-F-box) E3 ubiquitin-protein ligase complex SCF(FBXO9) composed of CUL1, SKP1, RBX1 and FBXO9. Interacts with TTI1 and TELO2; when TTI1 and TELO2 are phosphorylated by CK2.

The protein resides in the cytoplasm. The protein operates within protein modification; protein ubiquitination. Functionally, substrate recognition component of a SCF (SKP1-CUL1-F-box protein) E3 ubiquitin-protein ligase complex which mediates the ubiquitination and subsequent proteasomal degradation of target proteins and plays a role in several biological processes such as cell cycle, cell proliferation, or maintenance of chromosome stability. Ubiquitinates mTORC1-bound TTI1 and TELO2 when they are phosphorylated by CK2 following growth factor deprivation, leading to their degradation. In contrast, does not mediate ubiquitination of TTI1 and TELO2 when they are part of the mTORC2 complex. As a consequence, mTORC1 is inactivated to restrain cell growth and protein translation, while mTORC2 is the activated due to the relief of feedback inhibition by mTORC1. Plays a role in maintaining epithelial cell survival by regulating the turn-over of chromatin modulator PRMT4 through ubiquitination and degradation by the proteasomal pathway. Also regulates PPARgamma stability by facilitating PPARgamma/PPARG ubiquitination and thereby plays a role in adipocyte differentiation. The protein is F-box only protein 9 (Fbxo9) of Rattus norvegicus (Rat).